Reading from the N-terminus, the 92-residue chain is Large ribosomal subunit protein bL25 (92 aa).

Belongs to the bacterial ribosomal protein bL25 family. Part of the 50S ribosomal subunit; part of the 5S rRNA/L5/L18/L25 subcomplex. Contacts the 5S rRNA. Binds to the 5S rRNA independently of L5 and L18.

Functionally, this is one of the proteins that binds to the 5S RNA in the ribosome where it forms part of the central protuberance. This is Large ribosomal subunit protein bL25 from Photobacterium profundum (strain SS9).